Consider the following 484-residue polypeptide: Aspartyl/glutamyl-tRNA(Asn/Gln) amidotransferase subunit B (484 aa).

It belongs to the GatB/GatE family. GatB subfamily. As to quaternary structure, heterotrimer of A, B and C subunits.

The catalysed reaction is L-glutamyl-tRNA(Gln) + L-glutamine + ATP + H2O = L-glutaminyl-tRNA(Gln) + L-glutamate + ADP + phosphate + H(+). It catalyses the reaction L-aspartyl-tRNA(Asn) + L-glutamine + ATP + H2O = L-asparaginyl-tRNA(Asn) + L-glutamate + ADP + phosphate + 2 H(+). In terms of biological role, allows the formation of correctly charged Asn-tRNA(Asn) or Gln-tRNA(Gln) through the transamidation of misacylated Asp-tRNA(Asn) or Glu-tRNA(Gln) in organisms which lack either or both of asparaginyl-tRNA or glutaminyl-tRNA synthetases. The reaction takes place in the presence of glutamine and ATP through an activated phospho-Asp-tRNA(Asn) or phospho-Glu-tRNA(Gln). In Anaeromyxobacter dehalogenans (strain 2CP-1 / ATCC BAA-258), this protein is Aspartyl/glutamyl-tRNA(Asn/Gln) amidotransferase subunit B.